The sequence spans 418 residues: Argininosuccinate synthase (418 aa).

16-24 (AYSGGLDTS) is a binding site for ATP. Residue Tyr-95 coordinates L-citrulline. Gly-125 provides a ligand contact to ATP. Residues Thr-127, Asn-131, and Asp-132 each coordinate L-aspartate. Asn-131 lines the L-citrulline pocket. The L-citrulline site is built by Arg-135, Ser-183, Glu-267, and Tyr-279.

This sequence belongs to the argininosuccinate synthase family. Type 1 subfamily. As to quaternary structure, homotetramer.

It localises to the cytoplasm. It catalyses the reaction L-citrulline + L-aspartate + ATP = 2-(N(omega)-L-arginino)succinate + AMP + diphosphate + H(+). The protein operates within amino-acid biosynthesis; L-arginine biosynthesis; L-arginine from L-ornithine and carbamoyl phosphate: step 2/3. The polypeptide is Argininosuccinate synthase (Bifidobacterium adolescentis (strain ATCC 15703 / DSM 20083 / NCTC 11814 / E194a)).